The following is a 600-amino-acid chain: Aspartate--tRNA(Asp/Asn) ligase (600 aa).

Glutamate 187 is an L-aspartate binding site. The aspartate stretch occupies residues 211–214 (QIFK). Residues arginine 233 and histidine 463 each coordinate L-aspartate. 233-235 (RDE) provides a ligand contact to ATP. Position 497 (glutamate 497) interacts with ATP. L-aspartate is bound at residue arginine 504. 549-552 (GVDR) serves as a coordination point for ATP.

The protein belongs to the class-II aminoacyl-tRNA synthetase family. Type 1 subfamily. As to quaternary structure, homodimer.

It is found in the cytoplasm. The catalysed reaction is tRNA(Asx) + L-aspartate + ATP = L-aspartyl-tRNA(Asx) + AMP + diphosphate. Aspartyl-tRNA synthetase with relaxed tRNA specificity since it is able to aspartylate not only its cognate tRNA(Asp) but also tRNA(Asn). Reaction proceeds in two steps: L-aspartate is first activated by ATP to form Asp-AMP and then transferred to the acceptor end of tRNA(Asp/Asn). The protein is Aspartate--tRNA(Asp/Asn) ligase of Wolbachia pipientis subsp. Culex pipiens (strain wPip).